Consider the following 873-residue polypeptide: Leucine--tRNA ligase (873 aa).

The 'HIGH' region signature appears at 41-51 (PYPSGRIHMGH). The short motif at 645–649 (KMSKS) is the 'KMSKS' region element. Lys648 lines the ATP pocket.

This sequence belongs to the class-I aminoacyl-tRNA synthetase family.

It is found in the cytoplasm. It catalyses the reaction tRNA(Leu) + L-leucine + ATP = L-leucyl-tRNA(Leu) + AMP + diphosphate. In Cereibacter sphaeroides (strain ATCC 17025 / ATH 2.4.3) (Rhodobacter sphaeroides), this protein is Leucine--tRNA ligase.